The sequence spans 763 residues: Phosphoglycerol transferase I (763 aa).

The next 4 membrane-spanning stretches (helical) occupy residues 1-21 (MSEL…AWKA), 26-46 (WWFA…ITLF), 77-97 (ILPG…LGWI), and 108-128 (FGYS…SPAF).

This sequence belongs to the OpgB family.

The protein resides in the cell inner membrane. It catalyses the reaction a phosphatidylglycerol + a membrane-derived-oligosaccharide D-glucose = a 1,2-diacyl-sn-glycerol + a membrane-derived-oligosaccharide 6-(glycerophospho)-D-glucose.. It functions in the pathway glycan metabolism; osmoregulated periplasmic glucan (OPG) biosynthesis. In terms of biological role, transfers a phosphoglycerol residue from phosphatidylglycerol to the membrane-bound nascent glucan backbones. The chain is Phosphoglycerol transferase I from Escherichia coli O17:K52:H18 (strain UMN026 / ExPEC).